Reading from the N-terminus, the 497-residue chain is Glycerol kinase (497 aa).

Thr13 lines the ADP pocket. The ATP site is built by Thr13, Thr14, and Ser15. A sn-glycerol 3-phosphate-binding site is contributed by Thr13. Position 17 (Arg17) interacts with ADP. 3 residues coordinate sn-glycerol 3-phosphate: Arg83, Glu84, and Tyr135. Residues Arg83, Glu84, and Tyr135 each contribute to the glycerol site. Phosphohistidine; by HPr is present on His231. Position 245 (Asp245) interacts with sn-glycerol 3-phosphate. Glycerol-binding residues include Asp245 and Gln246. ADP-binding residues include Thr267 and Gly310. Positions 267, 310, 314, and 411 each coordinate ATP. ADP is bound by residues Gly411 and Asn415.

It belongs to the FGGY kinase family. In terms of assembly, homotetramer and homodimer (in equilibrium). In terms of processing, the phosphoenolpyruvate-dependent sugar phosphotransferase system (PTS), including enzyme I, and histidine-containing protein (HPr) are required for the phosphorylation, which leads to the activation of the enzyme.

The catalysed reaction is glycerol + ATP = sn-glycerol 3-phosphate + ADP + H(+). It participates in polyol metabolism; glycerol degradation via glycerol kinase pathway; sn-glycerol 3-phosphate from glycerol: step 1/1. Activated by phosphorylation and inhibited by fructose 1,6-bisphosphate (FBP). Functionally, key enzyme in the regulation of glycerol uptake and metabolism. Catalyzes the phosphorylation of glycerol to yield sn-glycerol 3-phosphate. This chain is Glycerol kinase, found in Listeria innocua serovar 6a (strain ATCC BAA-680 / CLIP 11262).